A 160-amino-acid polypeptide reads, in one-letter code: Phosphopantetheine adenylyltransferase (160 aa).

Position 9 (T9) interacts with substrate. ATP-binding positions include 9–10 (TF) and H17. Residues K41, L73, and R87 each coordinate substrate. Residues 88 to 90 (GLR), E98, and 123 to 129 (FSYTSSS) contribute to the ATP site.

It belongs to the bacterial CoaD family. In terms of assembly, homohexamer. Mg(2+) is required as a cofactor.

Its subcellular location is the cytoplasm. The enzyme catalyses (R)-4'-phosphopantetheine + ATP + H(+) = 3'-dephospho-CoA + diphosphate. The protein operates within cofactor biosynthesis; coenzyme A biosynthesis; CoA from (R)-pantothenate: step 4/5. Functionally, reversibly transfers an adenylyl group from ATP to 4'-phosphopantetheine, yielding dephospho-CoA (dPCoA) and pyrophosphate. The protein is Phosphopantetheine adenylyltransferase of Opitutus terrae (strain DSM 11246 / JCM 15787 / PB90-1).